Here is a 536-residue protein sequence, read N- to C-terminus: CTP synthase (536 aa).

An amidoligase domain region spans residues 1–267 (MSKFVFVTGG…CKQTLNCLEL (267 aa)). Ser13 contacts CTP. Ser13 provides a ligand contact to UTP. Residues 14 to 19 (SIGKGI) and Asp71 each bind ATP. Mg(2+) is bound by residues Asp71 and Glu141. CTP-binding positions include 148–150 (DIE), 188–193 (KTKPTQ), and Lys224. UTP-binding positions include 188–193 (KTKPTQ) and Lys224. In terms of domain architecture, Glutamine amidotransferase type-1 spans 292 to 534 (KVALVGKYIE…IKASQEKLEQ (243 aa)). Position 354 (Gly354) interacts with L-glutamine. The active-site Nucleophile; for glutamine hydrolysis is Cys381. Residues 382 to 385 (LGMQ), Glu405, and Arg462 contribute to the L-glutamine site. Catalysis depends on residues His507 and Glu509.

The protein belongs to the CTP synthase family. In terms of assembly, homotetramer.

The catalysed reaction is UTP + L-glutamine + ATP + H2O = CTP + L-glutamate + ADP + phosphate + 2 H(+). It catalyses the reaction L-glutamine + H2O = L-glutamate + NH4(+). It carries out the reaction UTP + NH4(+) + ATP = CTP + ADP + phosphate + 2 H(+). It functions in the pathway pyrimidine metabolism; CTP biosynthesis via de novo pathway; CTP from UDP: step 2/2. Allosterically activated by GTP, when glutamine is the substrate; GTP has no effect on the reaction when ammonia is the substrate. The allosteric effector GTP functions by stabilizing the protein conformation that binds the tetrahedral intermediate(s) formed during glutamine hydrolysis. Inhibited by the product CTP, via allosteric rather than competitive inhibition. Its function is as follows. Catalyzes the ATP-dependent amination of UTP to CTP with either L-glutamine or ammonia as the source of nitrogen. Regulates intracellular CTP levels through interactions with the four ribonucleotide triphosphates. This is CTP synthase from Prochlorococcus marinus subsp. pastoris (strain CCMP1986 / NIES-2087 / MED4).